An 860-amino-acid chain; its full sequence is Protein argonaute-2 (860 aa).

Position 2 is a 3'-nitrotyrosine (tyrosine 2). Residues proline 230 to alanine 349 enclose the PAZ domain. The tract at residues tyrosine 312–histidine 317 is interaction with guide RNA. Position 388 is a phosphoserine (serine 388). In terms of domain architecture, Piwi spans leucine 518–valine 819. An interaction with guide RNA region spans residues glycine 525–lysine 567. The tract at residues phenylalanine 588–proline 591 is interaction with GW182 family members. An a divalent metal cation-binding site is contributed by aspartate 598. Residues leucine 651–lysine 661 form an interaction with GW182 family members region. Position 670 (aspartate 670) interacts with a divalent metal cation. Proline 701 carries the post-translational modification 4-hydroxyproline. 3 interaction with guide RNA regions span residues lysine 710–arginine 711, histidine 754–arginine 762, and tyrosine 791–arginine 813. An a divalent metal cation-binding site is contributed by histidine 808. Serine 825, serine 829, serine 832, and serine 835 each carry phosphoserine.

It belongs to the argonaute family. Ago subfamily. Interacts with DICER1 through its Piwi domain and with TARBP2 during assembly of the RNA-induced silencing complex (RISC). Together, DICER1, AGO2 and TARBP2 constitute the trimeric RISC loading complex (RLC), or micro-RNA (miRNA) loading complex (miRLC). Within the RLC/miRLC, DICER1 and TARBP2 are required to process precursor miRNAs (pre-miRNAs) to mature miRNAs and then load them onto AGO2. AGO2 bound to the mature miRNA constitutes the minimal RISC and may subsequently dissociate from DICER1 and TARBP2. Note however that the term RISC has also been used to describe the trimeric RLC/miRLC. The formation of RISC complexes containing siRNAs rather than miRNAs appears to occur independently of DICER1. Interacts with AGO1. Also interacts with DDB1, DDX5, DDX6, DDX20, DHX30, DHX36, DDX47, DHX9, ELAVL, FXR1, GEMIN4, HNRNPF, IGF2BP1, ILF3, IMP8, MATR3, PABPC1, PRMT5, P4HA1, P4HB, RBM4, SART3, TNRC6A, TNRC6B, UPF1 and YBX1. Interacts with the P-body components DCP1A and XRN1. Associates with polysomes and messenger ribonucleoproteins (mNRPs). Interacts with RBM4; the interaction is modulated under stress-induced conditions, occurs under both cell proliferation and differentiation conditions and in an RNA- and phosphorylation-independent manner. Interacts with LIMD1, WTIP and AJUBA. Interacts with TRIM71; the interaction increases in presence of RNA. Interacts with APOBEC3G in an RNA-dependent manner. Interacts with APOBEC3A, APOBEC3C, APOBEC3F and APOBEC3H. Interacts with DICER1, TARBP2, EIF6, MOV10 and RPL7A (60S ribosome subunit); they form a large RNA-induced silencing complex (RISC). Interacts with FMR1. Interacts with ZFP36. Interacts with RC3H1; the interaction is RNA independent. Found in a complex, composed of AGO2, CHD7 and ARB2A. Interacts with SND1 and SYT11. Interacts with CLNK. Interacts with GARRE1. Interacts with GRB2; this interaction is important for the formation of a ternary complex containing GRB2, AGO2 and DICER1. Requires Mg(2+) as cofactor. The cofactor is Mn(2+). Hydroxylated. 4-hydroxylation appears to enhance protein stability but is not required for miRNA-binding or endonuclease activity. In terms of processing, ubiquitinated on surface-exposed lysines by a SCF-like E3 ubiquitin-protein ligase complex containing ZSWIM8 during target-directed microRNA degradation (TDMD), a process that mediates degradation of microRNAs (miRNAs). Ubiquitination by the SCF-like E3 ubiquitin-protein ligase complex containing ZSWIM8 leads to its subsequent degradation, thereby exposing miRNAs for degradation. ZSWIM8 recognizes and binds AGO2 when it is engaged with a TDMD target. Post-translationally, phosphorylation at Ser-388 by AKT3; leads to up-regulate translational repression of microRNA target and down-regulate endonucleolytic cleavage. A phosphorylation cycle of C-terminal serine cluster (Ser-825-Ser-835) regulates the release of target mRNAs. Target-binding leads to phosphorylation of these residues by CSNK1A1, which reduces the affinity of AGO2 for mRNA and enables target release. The ANKRD52-PPP6C phosphatase complex dephosphorylates the residues, which primes AGO2 for binding a new target.

It is found in the cytoplasm. The protein localises to the P-body. It localises to the nucleus. It carries out the reaction Endonucleolytic cleavage to 5'-phosphomonoester.. In terms of biological role, required for RNA-mediated gene silencing (RNAi) by the RNA-induced silencing complex (RISC). The 'minimal RISC' appears to include AGO2 bound to a short guide RNA such as a microRNA (miRNA) or short interfering RNA (siRNA). These guide RNAs direct RISC to complementary mRNAs that are targets for RISC-mediated gene silencing. The precise mechanism of gene silencing depends on the degree of complementarity between the miRNA or siRNA and its target. Binding of RISC to a perfectly complementary mRNA generally results in silencing due to endonucleolytic cleavage of the mRNA specifically by AGO2. Binding of RISC to a partially complementary mRNA results in silencing through inhibition of translation, and this is independent of endonuclease activity. May inhibit translation initiation by binding to the 7-methylguanosine cap, thereby preventing the recruitment of the translation initiation factor eIF4-E. May also inhibit translation initiation via interaction with EIF6, which itself binds to the 60S ribosomal subunit and prevents its association with the 40S ribosomal subunit. The inhibition of translational initiation leads to the accumulation of the affected mRNA in cytoplasmic processing bodies (P-bodies), where mRNA degradation may subsequently occur. In some cases RISC-mediated translational repression is also observed for miRNAs that perfectly match the 3' untranslated region (3'-UTR). Can also up-regulate the translation of specific mRNAs under certain growth conditions. Binds to the AU element of the 3'-UTR of the TNF (TNF-alpha) mRNA and up-regulates translation under conditions of serum starvation. Also required for transcriptional gene silencing (TGS), in which short RNAs known as antigene RNAs or agRNAs direct the transcriptional repression of complementary promoter regions. The polypeptide is Protein argonaute-2 (Ago2) (Rattus norvegicus (Rat)).